The primary structure comprises 377 residues: Cilia- and flagella-associated protein 263 (377 aa).

Coiled coils occupy residues L95–R139 and Q169–Y355.

The protein belongs to the CFAP263 family. As to quaternary structure, forms a complex with CFAP184; the interaction is required for functional activity in cilia. Interacts with HAP1 and PCM1.

The protein resides in the cytoplasm. The protein localises to the cytoskeleton. It is found in the microtubule organizing center. Its subcellular location is the centrosome. It localises to the centriolar satellite. The protein resides in the cell projection. The protein localises to the cilium. In terms of biological role, component of centriolar satellites contributing to primary cilium formation. In complex with CFAP263, acts as a regulator of ciliary beating that connects radial spoke 3 (RS3) to the inner dynein arm (IDA) and the nexin-dynein regulatory complex (N-DRC). The complex is positioned parallel to N-DRC and forms a connection between the arch at the base of RS3, the IDA tail and N-DRC. This chain is Cilia- and flagella-associated protein 263 (Cfap263), found in Mus musculus (Mouse).